Consider the following 1517-residue polypeptide: Neurite extension and migration factor (1517 aa).

Basic and acidic residues predominate over residues Asp-381–Glu-405. Disordered regions lie at residues Asp-381–Gly-416, Val-505–Arg-529, Ser-644–Gly-697, Lys-732–Glu-775, Arg-1065–Ser-1084, Asp-1161–Lys-1228, and Ala-1372–Asp-1422. Over residues Ser-644–Ala-663 the composition is skewed to polar residues. Residues Ser-678–Ala-687 show a composition bias toward low complexity. Residues Thr-764–Met-773 are compositionally biased toward polar residues.

It localises to the nucleus. The protein resides in the cytoplasm. Involved in neurite outgrowth by regulating cell-cell adhesion via the N-cadherin signaling pathway. May act by regulating expression of protein-coding genes, such as N-cadherins and integrin beta-1 (ITGB1). The sequence is that of Neurite extension and migration factor from Rattus norvegicus (Rat).